The following is a 152-amino-acid chain: Large ribosomal subunit protein bL9 (152 aa).

It belongs to the bacterial ribosomal protein bL9 family.

Binds to the 23S rRNA. In Prochlorococcus marinus (strain NATL1A), this protein is Large ribosomal subunit protein bL9.